Here is a 379-residue protein sequence, read N- to C-terminus: DNA replication and repair protein RecF (379 aa).

30–37 serves as a coordination point for ATP; sequence GKNAQGKT.

This sequence belongs to the RecF family.

It is found in the cytoplasm. Its function is as follows. The RecF protein is involved in DNA metabolism; it is required for DNA replication and normal SOS inducibility. RecF binds preferentially to single-stranded, linear DNA. It also seems to bind ATP. The sequence is that of DNA replication and repair protein RecF from Ligilactobacillus salivarius (strain UCC118) (Lactobacillus salivarius).